The following is an 89-amino-acid chain: Small ribosomal subunit protein uS14A (89 aa).

This sequence belongs to the universal ribosomal protein uS14 family. As to quaternary structure, part of the 30S ribosomal subunit. Contacts proteins S3 and S10.

Binds 16S rRNA, required for the assembly of 30S particles and may also be responsible for determining the conformation of the 16S rRNA at the A site. This Pediococcus pentosaceus (strain ATCC 25745 / CCUG 21536 / LMG 10740 / 183-1w) protein is Small ribosomal subunit protein uS14A.